A 581-amino-acid chain; its full sequence is Arginine--tRNA ligase (581 aa).

The short motif at 122 to 132 (PNVAKPMHVGH) is the 'HIGH' region element.

This sequence belongs to the class-I aminoacyl-tRNA synthetase family. Monomer.

The protein resides in the cytoplasm. The catalysed reaction is tRNA(Arg) + L-arginine + ATP = L-arginyl-tRNA(Arg) + AMP + diphosphate. The polypeptide is Arginine--tRNA ligase (Francisella tularensis subsp. novicida (strain U112)).